A 208-amino-acid polypeptide reads, in one-letter code: Large ribosomal subunit protein uL4 (208 aa).

The disordered stretch occupies residues Q44–N79.

The protein belongs to the universal ribosomal protein uL4 family. In terms of assembly, part of the 50S ribosomal subunit.

In terms of biological role, one of the primary rRNA binding proteins, this protein initially binds near the 5'-end of the 23S rRNA. It is important during the early stages of 50S assembly. It makes multiple contacts with different domains of the 23S rRNA in the assembled 50S subunit and ribosome. Functionally, forms part of the polypeptide exit tunnel. The sequence is that of Large ribosomal subunit protein uL4 from Bacteroides fragilis (strain YCH46).